Reading from the N-terminus, the 518-residue chain is 12S seed storage globulin 2 (518 aa).

The first 24 residues, 1–24 (MATTRFPSLLFYSYIFLLCNGSMA), serve as a signal peptide directing secretion. Disulfide bonds link Cys-45-Cys-78 and Cys-121-Cys-324. The Cupin type-1 1 domain maps to 50–240 (LQAFEPLRQV…ALGISQQVAQ (191 aa)). The interval 280-311 (IQSQEEQSTQYQVGQSPQYQEGQSTQYQPGQS) is disordered. One can recognise a Cupin type-1 2 domain in the interval 330–479 (QNIENPKRAD…AYRISRQEAQ (150 aa)). The disordered stretch occupies residues 482–518 (KNNRGEEFDAFTPKFTQTGSQSYQDEGESSSTEKASE). Over residues 495–518 (KFTQTGSQSYQDEGESSSTEKASE) the composition is skewed to polar residues.

It belongs to the 11S seed storage protein (globulins) family. Hexamer; each subunit is composed of an acidic and a basic chain derived from a single precursor and linked by a disulfide bond.

Functionally, this is a seed storage protein. The protein is 12S seed storage globulin 2 of Avena sativa (Oat).